Consider the following 145-residue polypeptide: Mannitol-specific phosphotransferase enzyme IIA component (145 aa).

The 144-residue stretch at 2–145 (ENLTNISIEL…EEITENLAIA (144 aa)) folds into the PTS EIIA type-2 domain. The Tele-phosphohistidine intermediate role is filled by His62. Position 62 is a phosphohistidine; by HPr (His62).

The protein localises to the cytoplasm. In terms of biological role, the phosphoenolpyruvate-dependent sugar phosphotransferase system (sugar PTS), a major carbohydrate active transport system, catalyzes the phosphorylation of incoming sugar substrates concomitantly with their translocation across the cell membrane. The enzyme II CmtAB PTS system is involved in D-mannitol transport. In Enterococcus faecalis (strain ATCC 700802 / V583), this protein is Mannitol-specific phosphotransferase enzyme IIA component.